The chain runs to 134 residues: U-scoloptoxin(05)-Er2a (134 aa).

Residues 1-19 form the signal peptide; the sequence is MTFVVAAVVLLTVVPLATP.

This sequence belongs to the scoloptoxin-05 family. Contains 5 disulfide bonds. As to expression, expressed by the venom gland.

It localises to the secreted. The polypeptide is U-scoloptoxin(05)-Er2a (Ethmostigmus rubripes (Giant centipede)).